Consider the following 59-residue polypeptide: Potassium channel toxin alpha-KTx 4.7 (59 aa).

An N-terminal signal peptide occupies residues 1-22 (MKAFYGILIIFILISMLDLSQQ). 3 disulfide bridges follow: C29–C50, C35–C55, and C39–C57. The interaction with Ca(2+)-activated K(+) channels stretch occupies residues 48 to 55 (GKCMNGKC).

It belongs to the short scorpion toxin superfamily. Potassium channel inhibitor family. Alpha-KTx 04 subfamily. As to expression, expressed by the venom gland.

Its subcellular location is the secreted. Potently blocks Kv1.1/KCNA1 (85%), Kv1.2/KCNA2 (91%), Kv1.3/KCNA3 (89%), Kv1.6/KCNA6 (94%), and Shaker (97%). This Tityus stigmurus (Brazilian scorpion) protein is Potassium channel toxin alpha-KTx 4.7.